A 368-amino-acid polypeptide reads, in one-letter code: CST complex subunit STN1 (368 aa).

The interval 2–192 (AVSLGDDDAD…KCYDQPFKMP (191 aa)) is interaction with CTC1. The OB DNA-binding region spans 58-162 (VDVLGIVVYK…EIKATSFYKV (105 aa)). Winged helix-turn-helix (wHTH) regions lie at residues 201–295 (AGGS…NVTE) and 296–368 (QDKD…YIVL).

The protein belongs to the CTC1 family. As to quaternary structure, component of the CST complex.

The protein localises to the nucleus. The protein resides in the chromosome. It localises to the telomere. Its function is as follows. Component of the CST complex proposed to act as a specialized replication factor promoting DNA replication under conditions of replication stress or natural replication barriers such as the telomere duplex. The CST complex binds single-stranded DNA with high affinity in a sequence-independent manner, while isolated subunits bind DNA with low affinity by themselves. Initially the CST complex has been proposed to protect telomeres from DNA degradation. However, the CST complex has been shown to be involved in several aspects of telomere replication. The protein is CST complex subunit STN1 of Danio rerio (Zebrafish).